The sequence spans 451 residues: Protein NINJA homolog 1 (451 aa).

Disordered stretches follow at residues 1-223 (MDDE…QGNP), 321-346 (ISQA…DDKK), and 427-451 (DAPG…SAQN). Over residues 23–35 (KARDAPLEPKAEP) the composition is skewed to basic and acidic residues. Composition is skewed to polar residues over residues 38–49 (EESSSKGVSQTP), 86–103 (PGSS…QKPV), and 143–153 (ISISTDDGSTG). Positions 154–163 (ENEDVAESEA) are enriched in acidic residues. A compositionally biased stretch (low complexity) spans 207 to 216 (SFSGSESSSG).

It belongs to the Ninja family. In terms of assembly, interacts with TIFY10C/JAZ8. Interacts with TIFY11A/JAZ9.

It is found in the nucleus. The polypeptide is Protein NINJA homolog 1 (Oryza sativa subsp. japonica (Rice)).